Here is a 666-residue protein sequence, read N- to C-terminus: Protein OPG074 (666 aa).

Residues 574–596 (VVIFFNTIIEYIVATIYYRLAVL) form a helical membrane-spanning segment.

The protein belongs to the orthopoxvirus OPG074 family.

It localises to the membrane. The polypeptide is Protein OPG074 (OPG074) (Homo sapiens (Human)).